A 240-amino-acid polypeptide reads, in one-letter code: Aliphatic sulfonates import ATP-binding protein SsuB (240 aa).

The ABC transporter domain occupies Ile6–Glu227. ATP is bound at residue Gly38–Ser45.

Belongs to the ABC transporter superfamily. Aliphatic sulfonates importer (TC 3.A.1.17.2) family. As to quaternary structure, the complex is composed of two ATP-binding proteins (SsuB), two transmembrane proteins (SsuC) and a solute-binding protein (SsuA).

Its subcellular location is the cell inner membrane. It carries out the reaction ATP + H2O + aliphatic sulfonate-[sulfonate-binding protein]Side 1 = ADP + phosphate + aliphatic sulfonateSide 2 + [sulfonate-binding protein]Side 1.. Functionally, part of the ABC transporter complex SsuABC involved in aliphatic sulfonates import. Responsible for energy coupling to the transport system. The protein is Aliphatic sulfonates import ATP-binding protein SsuB of Zymomonas mobilis subsp. mobilis (strain ATCC 31821 / ZM4 / CP4).